The sequence spans 1268 residues: uncharacterized protein (1268 aa).

The segment covering lysine 191–valine 206 has biased composition (low complexity). 2 disordered regions span residues lysine 191–lysine 235 and asparagine 253–cysteine 273. A compositionally biased stretch (basic and acidic residues) spans arginine 223–lysine 235. The CCHC-type zinc-finger motif lies at proline 239–serine 256. Residues glutamate 465–aspartate 644 enclose the Reverse transcriptase domain. One can recognise an Integrase catalytic domain in the interval valine 844–lysine 997. The disordered stretch occupies residues glycine 1092–arginine 1268. Polar residues-rich tracts occupy residues valine 1127 to threonine 1143 and glycine 1160 to valine 1169. The span at proline 1208–threonine 1221 shows a compositional bias: low complexity. The segment covering glutamine 1222–serine 1249 has biased composition (polar residues). Basic and acidic residues predominate over residues threonine 1257 to arginine 1268.

This is an uncharacterized protein from Caenorhabditis elegans.